Here is a 228-residue protein sequence, read N- to C-terminus: 2,3-bisphosphoglycerate-dependent phosphoglycerate mutase (228 aa).

Substrate contacts are provided by residues 7-14, 20-21, Arg-59, 86-89, Lys-97, 113-114, and 182-183; these read RHGESAWN, TG, ERHY, RR, and GN. The active-site Tele-phosphohistidine intermediate is His-8. Glu-86 serves as the catalytic Proton donor/acceptor.

Belongs to the phosphoglycerate mutase family. BPG-dependent PGAM subfamily.

It catalyses the reaction (2R)-2-phosphoglycerate = (2R)-3-phosphoglycerate. It functions in the pathway carbohydrate degradation; glycolysis; pyruvate from D-glyceraldehyde 3-phosphate: step 3/5. In terms of biological role, catalyzes the interconversion of 2-phosphoglycerate and 3-phosphoglycerate. This chain is 2,3-bisphosphoglycerate-dependent phosphoglycerate mutase, found in Fusobacterium nucleatum subsp. nucleatum (strain ATCC 25586 / DSM 15643 / BCRC 10681 / CIP 101130 / JCM 8532 / KCTC 2640 / LMG 13131 / VPI 4355).